A 65-amino-acid polypeptide reads, in one-letter code: Large ribosomal subunit protein bL33c (65 aa).

Belongs to the bacterial ribosomal protein bL33 family.

Its subcellular location is the plastid. The protein resides in the chloroplast. This chain is Large ribosomal subunit protein bL33c (rpl33), found in Porphyra purpurea (Red seaweed).